The following is a 382-amino-acid chain: 3-dehydroquinate synthase (382 aa).

NAD(+) contacts are provided by residues 115–119 (GVVGD), 139–140 (TS), Lys152, and Lys161. Zn(2+)-binding residues include Glu194, His256, and His274.

This sequence belongs to the sugar phosphate cyclases superfamily. Dehydroquinate synthase family. Co(2+) is required as a cofactor. The cofactor is Zn(2+). It depends on NAD(+) as a cofactor.

The protein resides in the cytoplasm. It carries out the reaction 7-phospho-2-dehydro-3-deoxy-D-arabino-heptonate = 3-dehydroquinate + phosphate. It functions in the pathway metabolic intermediate biosynthesis; chorismate biosynthesis; chorismate from D-erythrose 4-phosphate and phosphoenolpyruvate: step 2/7. In terms of biological role, catalyzes the conversion of 3-deoxy-D-arabino-heptulosonate 7-phosphate (DAHP) to dehydroquinate (DHQ). The chain is 3-dehydroquinate synthase from Rhodopseudomonas palustris (strain BisB18).